A 323-amino-acid polypeptide reads, in one-letter code: tRNA U34 carboxymethyltransferase (323 aa).

Residues lysine 91, tryptophan 105, lysine 110, glycine 130, 152–154, 181–182, methionine 196, tyrosine 200, and arginine 315 each bind carboxy-S-adenosyl-L-methionine; these read DPT and IE.

This sequence belongs to the class I-like SAM-binding methyltransferase superfamily. CmoB family. Homotetramer.

The enzyme catalyses carboxy-S-adenosyl-L-methionine + 5-hydroxyuridine(34) in tRNA = 5-carboxymethoxyuridine(34) in tRNA + S-adenosyl-L-homocysteine + H(+). Functionally, catalyzes carboxymethyl transfer from carboxy-S-adenosyl-L-methionine (Cx-SAM) to 5-hydroxyuridine (ho5U) to form 5-carboxymethoxyuridine (cmo5U) at position 34 in tRNAs. This Escherichia coli (strain SE11) protein is tRNA U34 carboxymethyltransferase.